The chain runs to 194 residues: Adenylate kinase isoenzyme 1 (194 aa).

Met-1 carries the post-translational modification N-acetylmethionine. 18 to 23 (GSGKGT) serves as a coordination point for ATP. Ser-38 carries the phosphoserine modification. Residues 38–67 (STGDLLRSEVSSGSARGKKLSEIMEKGQLV) are NMP. AMP-binding positions include Thr-39, Arg-44, 65 to 67 (QLV), 94 to 97 (GYPR), and Gln-101. The segment at 131–141 (KRGETSGRVDD) is LID. Arg-132 is a binding site for ATP. AMP is bound by residues Arg-138 and Arg-149. Gly-177 is a binding site for ATP.

This sequence belongs to the adenylate kinase family. AK1 subfamily. As to quaternary structure, monomer. Requires Mg(2+) as cofactor.

It is found in the cytoplasm. It catalyses the reaction a ribonucleoside 5'-phosphate + ATP = a ribonucleoside 5'-diphosphate + ADP. The catalysed reaction is AMP + ATP = 2 ADP. The enzyme catalyses dAMP + ATP = dADP + ADP. It carries out the reaction dATP + AMP = dADP + ADP. It catalyses the reaction dAMP + dATP = 2 dADP. The catalysed reaction is a 2'-deoxyribonucleoside 5'-diphosphate + ATP = a 2'-deoxyribonucleoside 5'-triphosphate + ADP. The enzyme catalyses a ribonucleoside 5'-diphosphate + ATP = a ribonucleoside 5'-triphosphate + ADP. It carries out the reaction CDP + GTP = CTP + GDP. It catalyses the reaction GDP + ATP = GTP + ADP. The catalysed reaction is UDP + ATP = UTP + ADP. The enzyme catalyses GTP + UDP = UTP + GDP. It carries out the reaction dTDP + GTP = dTTP + GDP. It catalyses the reaction dCDP + GTP = dCTP + GDP. The catalysed reaction is dGDP + ATP = dGTP + ADP. The enzyme catalyses dADP + GTP = dATP + GDP. It carries out the reaction thiamine diphosphate + ADP = thiamine triphosphate + AMP. Functionally, catalyzes the reversible transfer of the terminal phosphate group between ATP and AMP. Also displays broad nucleoside diphosphate kinase activity. Plays an important role in cellular energy homeostasis and in adenine nucleotide metabolism. Also catalyzes at a very low rate the synthesis of thiamine triphosphate (ThTP) from thiamine diphosphate (ThDP) and ADP. The polypeptide is Adenylate kinase isoenzyme 1 (Homo sapiens (Human)).